A 432-amino-acid polypeptide reads, in one-letter code: Trigger factor (432 aa).

One can recognise a PPIase FKBP-type domain in the interval 161–246 (EDRVTIDFTG…LKKVEERELP (86 aa)).

The protein belongs to the FKBP-type PPIase family. Tig subfamily.

The protein localises to the cytoplasm. The catalysed reaction is [protein]-peptidylproline (omega=180) = [protein]-peptidylproline (omega=0). In terms of biological role, involved in protein export. Acts as a chaperone by maintaining the newly synthesized protein in an open conformation. Functions as a peptidyl-prolyl cis-trans isomerase. The chain is Trigger factor from Cronobacter sakazakii (strain ATCC BAA-894) (Enterobacter sakazakii).